We begin with the raw amino-acid sequence, 200 residues long: Dephospho-CoA kinase (200 aa).

Positions 6–200 (AIALSGGIAT…KIKAKYLEKK (195 aa)) constitute a DPCK domain. 14–19 (ATGKST) contributes to the ATP binding site.

It belongs to the CoaE family.

It localises to the cytoplasm. It catalyses the reaction 3'-dephospho-CoA + ATP = ADP + CoA + H(+). The protein operates within cofactor biosynthesis; coenzyme A biosynthesis; CoA from (R)-pantothenate: step 5/5. Its function is as follows. Catalyzes the phosphorylation of the 3'-hydroxyl group of dephosphocoenzyme A to form coenzyme A. The chain is Dephospho-CoA kinase from Sulfurimonas denitrificans (strain ATCC 33889 / DSM 1251) (Thiomicrospira denitrificans (strain ATCC 33889 / DSM 1251)).